The sequence spans 552 residues: ATP synthase subunit alpha (552 aa).

Residue 173 to 180 participates in ATP binding; sequence GDRQTGKT. The disordered stretch occupies residues 516 to 552; sequence DGKPLVNEPAPSPLDPGLVRQESIPVHRPAARKDDEG.

Belongs to the ATPase alpha/beta chains family. In terms of assembly, F-type ATPases have 2 components, CF(1) - the catalytic core - and CF(0) - the membrane proton channel. CF(1) has five subunits: alpha(3), beta(3), gamma(1), delta(1), epsilon(1). CF(0) has three main subunits: a(1), b(2) and c(9-12). The alpha and beta chains form an alternating ring which encloses part of the gamma chain. CF(1) is attached to CF(0) by a central stalk formed by the gamma and epsilon chains, while a peripheral stalk is formed by the delta and b chains.

It localises to the cell membrane. It carries out the reaction ATP + H2O + 4 H(+)(in) = ADP + phosphate + 5 H(+)(out). Functionally, produces ATP from ADP in the presence of a proton gradient across the membrane. The alpha chain is a regulatory subunit. The chain is ATP synthase subunit alpha from Frankia casuarinae (strain DSM 45818 / CECT 9043 / HFP020203 / CcI3).